The following is a 257-amino-acid chain: Small ribosomal subunit protein uS3 (257 aa).

The 71-residue stretch at 40–110 (IRKYLSTKYK…LVSLKVVEVQ (71 aa)) folds into the KH type-2 domain. Residues 223 to 257 (ANKEFSRSSKPKKGSFNRSSRSKNTKPAPKQAVSE) are disordered. Residues 231–246 (SKPKKGSFNRSSRSKN) are compositionally biased toward basic residues.

The protein belongs to the universal ribosomal protein uS3 family. As to quaternary structure, part of the 30S ribosomal subunit. Forms a tight complex with proteins S10 and S14.

Binds the lower part of the 30S subunit head. Binds mRNA in the 70S ribosome, positioning it for translation. The sequence is that of Small ribosomal subunit protein uS3 from Ureaplasma parvum serovar 3 (strain ATCC 27815 / 27 / NCTC 11736).